The sequence spans 359 residues: Ribosomal RNA large subunit methyltransferase M (359 aa).

S-adenosyl-L-methionine is bound by residues serine 186, cysteine 219 to glycine 222, aspartate 238, aspartate 258, and aspartate 275. Catalysis depends on lysine 304, which acts as the Proton acceptor.

This sequence belongs to the class I-like SAM-binding methyltransferase superfamily. RNA methyltransferase RlmE family. RlmM subfamily. As to quaternary structure, monomer.

Its subcellular location is the cytoplasm. It carries out the reaction cytidine(2498) in 23S rRNA + S-adenosyl-L-methionine = 2'-O-methylcytidine(2498) in 23S rRNA + S-adenosyl-L-homocysteine + H(+). Catalyzes the 2'-O-methylation at nucleotide C2498 in 23S rRNA. The protein is Ribosomal RNA large subunit methyltransferase M of Vibrio parahaemolyticus serotype O3:K6 (strain RIMD 2210633).